A 184-amino-acid chain; its full sequence is Ribosome-recycling factor (184 aa).

It belongs to the RRF family.

It is found in the cytoplasm. Responsible for the release of ribosomes from messenger RNA at the termination of protein biosynthesis. May increase the efficiency of translation by recycling ribosomes from one round of translation to another. The sequence is that of Ribosome-recycling factor from Stenotrophomonas maltophilia (strain R551-3).